We begin with the raw amino-acid sequence, 406 residues long: MLLWLIIFVSGWTLSLGSETEPDFTWHLSRIPQVVSEKTIHLASPTFQADAAAVKATVCGIECQEELPAPSLSQLEDFLSYETVFENGTRTLTRVKVQGLVLEPTQNSSIKGARPRRRRQVYGTDSRFSILDKRFLTNFPFNTAVKLSTGCSGALVSPNHVLTAAHCVHDGKDYVKGSKKLRVGVLKMRNKGGRKKRRGSRRSRREAESGGQSPEHPQESTTQRPGKKSRRGPRVAQGRPSFQWTRVKSTHIPKGWARGENGDPALDFDYALLELKRAQKQQYMELGVSPTISKLPGGRIHFSGFDNDRDDQLVYRFCSVSEESNDLLYQYCDAEAGSTGSGIYLRLKEPGQKNWKRKIIAVYSGHQWVDVHGVQKDYNVAVRITPLKYAQICLWIHGNAANCAYG.

An N-terminal signal peptide occupies residues 1–17; it reads MLLWLIIFVSGWTLSLG. An N-linked (GlcNAc...) asparagine glycan is attached at Asn87. The Peptidase S1 domain maps to 121–401; sequence VYGTDSRFSI…ICLWIHGNAA (281 aa). A disulfide bridge links Cys151 with Cys167. Residues 186 to 204 are compositionally biased toward basic residues; sequence LKMRNKGGRKKRRGSRRSR. Residues 186–248 form a disordered region; the sequence is LKMRNKGGRK…RPSFQWTRVK (63 aa).

This sequence belongs to the peptidase S1 family.

The protein resides in the secreted. The sequence is that of Inactive serine protease 35 (Prss35) from Rattus norvegicus (Rat).